The following is a 122-amino-acid chain: MRFFYKLALMTTVASLACSDTALASTDLMPFNVAETQVSTHDIVSAGRSLRAEDTSTSIDNLRDPTMKEKIQFKLWYTRGKTPGQVHRDFFEGLDESIIVNNPNYEVWKMYEAYYNNKKGND.

A signal peptide spans 1–24 (MRFFYKLALMTTVASLACSDTALA). Positions 48-51 (RSLR) match the RxLR motif.

It belongs to the RxLR effector family.

Its subcellular location is the secreted. It is found in the host cytoplasm. The protein localises to the host nucleus. Secreted effector that does not suppress pattern-triggered immunity (PTI) in plant host. This Plasmopara halstedii (Downy mildew of sunflower) protein is Secreted RxLR effector protein RXLR-C251.